The sequence spans 282 residues: Pantothenate synthetase (282 aa).

Residue Met-30–His-37 participates in ATP binding. His-37 serves as the catalytic Proton donor. (R)-pantoate is bound at residue Gln-61. Gln-61 is a beta-alanine binding site. Residue Gly-147 to Asp-150 coordinates ATP. Gln-153 lines the (R)-pantoate pocket. Residues Val-176 and Leu-184–Arg-187 contribute to the ATP site.

It belongs to the pantothenate synthetase family. In terms of assembly, homodimer.

It localises to the cytoplasm. It catalyses the reaction (R)-pantoate + beta-alanine + ATP = (R)-pantothenate + AMP + diphosphate + H(+). It functions in the pathway cofactor biosynthesis; (R)-pantothenate biosynthesis; (R)-pantothenate from (R)-pantoate and beta-alanine: step 1/1. Catalyzes the condensation of pantoate with beta-alanine in an ATP-dependent reaction via a pantoyl-adenylate intermediate. The sequence is that of Pantothenate synthetase from Bacteroides fragilis (strain ATCC 25285 / DSM 2151 / CCUG 4856 / JCM 11019 / LMG 10263 / NCTC 9343 / Onslow / VPI 2553 / EN-2).